Here is a 198-residue protein sequence, read N- to C-terminus: Suppressor of cytokine signaling 2 (198 aa).

The tract at residues 1 to 75 (MTLRCLESSG…PEGTFLIRDS (75 aa)) is interaction with AREL1. The segment at 6–30 (LESSGNGAEGAQSQWGTAGSAEEPS) is disordered. Polar residues predominate over residues 8 to 22 (SSGNGAEGAQSQWGT). Residues Ser30 and Ser52 each carry the phosphoserine modification. In terms of domain architecture, SH2 spans 48–156 (WYWGSMTVNE…TVHLYLTKPL (109 aa)). The region spanning 151–197 (YLTKPLYTSAPPLQHLCRLTINKCTSTVWGLPLPTRLKDYLEEYKFQ) is the SOCS box domain. Lys173 participates in a covalent cross-link: Glycyl lysine isopeptide (Lys-Gly) (interchain with G-Cter in ubiquitin).

In terms of assembly, substrate-recognition component of the ECS(SOCS2) complex, composed of SOCS2, CUL5, ELOB, ELOC and RNF7/RBX2. Interacts with IGF1R. Interacts with DCUN1D1. In terms of processing, ubiquitinated; mediated by AREL1 and leading to its subsequent proteasomal degradation. Ubiquitination is dependent on its phosphorylation at Ser-52, by PKC. Ubiquitination is stimulated by LPS. Post-translationally, phosphorylation at Ser-52 by PKC facilitates its ubiquitination and proteasomal degradation.

The protein resides in the cytoplasm. It participates in protein modification; protein ubiquitination. Substrate-recognition component of a cullin-5-RING E3 ubiquitin-protein ligase complex (ECS complex, also named CRL5 complex), which mediates the ubiquitination and subsequent proteasomal degradation of target proteins, such as EPOR and GHR. Specifically recognizes and binds phosphorylated proteins via its SH2 domain, promoting their ubiquitination. The ECS(SOCS2) complex acts as a key regulator of growth hormone receptor (GHR) levels by mediating ubiquitination and degradation of GHR, following GHR phosphorylation by JAK2. The ECS(SOCS2) also catalyzes ubiquitination and degradation of JAK2-phosphorylated EPOR. This chain is Suppressor of cytokine signaling 2 (SOCS2), found in Bos taurus (Bovine).